Consider the following 532-residue polypeptide: 2,3-bisphosphoglycerate-independent phosphoglycerate mutase (532 aa).

Positions 13 and 63 each coordinate Mn(2+). Residue Ser-63 is the Phosphoserine intermediate of the active site. Substrate contacts are provided by residues His-124, 154–155 (RD), Arg-187, Arg-193, 262–265 (RPDR), and Lys-343. Positions 421, 425, 463, 464, and 481 each coordinate Mn(2+).

The protein belongs to the BPG-independent phosphoglycerate mutase family. As to quaternary structure, monomer. It depends on Mn(2+) as a cofactor.

It catalyses the reaction (2R)-2-phosphoglycerate = (2R)-3-phosphoglycerate. The protein operates within carbohydrate degradation; glycolysis; pyruvate from D-glyceraldehyde 3-phosphate: step 3/5. In terms of biological role, catalyzes the interconversion of 2-phosphoglycerate and 3-phosphoglycerate. In Mesoplasma florum (strain ATCC 33453 / NBRC 100688 / NCTC 11704 / L1) (Acholeplasma florum), this protein is 2,3-bisphosphoglycerate-independent phosphoglycerate mutase.